Reading from the N-terminus, the 307-residue chain is tRNA dimethylallyltransferase 2 (307 aa).

Residue 11-18 coordinates ATP; the sequence is GPTASGKT. 13–18 lines the substrate pocket; sequence TASGKT. The segment at 36–39 is interaction with substrate tRNA; it reads DSRQ.

It belongs to the IPP transferase family. As to quaternary structure, monomer. Requires Mg(2+) as cofactor.

It carries out the reaction adenosine(37) in tRNA + dimethylallyl diphosphate = N(6)-dimethylallyladenosine(37) in tRNA + diphosphate. Its function is as follows. Catalyzes the transfer of a dimethylallyl group onto the adenine at position 37 in tRNAs that read codons beginning with uridine, leading to the formation of N6-(dimethylallyl)adenosine (i(6)A). This chain is tRNA dimethylallyltransferase 2, found in Phocaeicola vulgatus (strain ATCC 8482 / DSM 1447 / JCM 5826 / CCUG 4940 / NBRC 14291 / NCTC 11154) (Bacteroides vulgatus).